A 199-amino-acid polypeptide reads, in one-letter code: 5'-deoxynucleotidase KPK_1466 (199 aa).

Residues 18–19 and His33 contribute to the substrate site; that span reads RW. In terms of domain architecture, HD spans 30–142; the sequence is VSEHSLQVAM…VKQADALCAY (113 aa). A divalent metal cation is bound by residues His33, His68, and Asp69. Residues Asp69, 77–80, and Asp137 contribute to the substrate site; that span reads DLPT. Asp137 serves as a coordination point for a divalent metal cation.

The protein belongs to the 5DNU family. Homodimer. A divalent metal cation serves as cofactor.

It is found in the cytoplasm. The enzyme catalyses a 2'-deoxyribonucleoside 5'-phosphate + H2O = a 2'-deoxyribonucleoside + phosphate. Its function is as follows. Catalyzes the strictly specific dephosphorylation of 2'-deoxyribonucleoside 5'-monophosphates. The protein is 5'-deoxynucleotidase KPK_1466 of Klebsiella pneumoniae (strain 342).